Consider the following 241-residue polypeptide: Chaperone protein FimC (241 aa).

Positions 1-36 are cleaved as a signal peptide; that stretch reads MSNKNVNVRKSQEITFCLLAGILMFMAMVVAGRAEA.

The protein belongs to the periplasmic pilus chaperone family.

It is found in the periplasm. In terms of biological role, required for the biogenesis of type 1 fimbriae. Binds and interact with FimH. This is Chaperone protein FimC (fimC) from Escherichia coli O6:H1 (strain CFT073 / ATCC 700928 / UPEC).